The chain runs to 186 residues: Ribosome-recycling factor (186 aa).

The tract at residues 144-163 (EKDGVIGQDESRAQSERVQK) is disordered.

Belongs to the RRF family.

The protein localises to the cytoplasm. Responsible for the release of ribosomes from messenger RNA at the termination of protein biosynthesis. May increase the efficiency of translation by recycling ribosomes from one round of translation to another. The protein is Ribosome-recycling factor of Rhizobium etli (strain CIAT 652).